We begin with the raw amino-acid sequence, 492 residues long: 2,3-bisphosphoglycerate-independent phosphoglycerate mutase (492 aa).

Residues Asp-11 and Ser-61 each coordinate Mn(2+). Ser-61 (phosphoserine intermediate) is an active-site residue. Substrate is bound by residues His-118, 147–148 (RD), Arg-177, Arg-183, 248–251 (RSDR), and Lys-321. Positions 387, 391, 428, 429, and 446 each coordinate Mn(2+).

Belongs to the BPG-independent phosphoglycerate mutase family. In terms of assembly, monomer. Requires Mn(2+) as cofactor.

It carries out the reaction (2R)-2-phosphoglycerate = (2R)-3-phosphoglycerate. It participates in carbohydrate degradation; glycolysis; pyruvate from D-glyceraldehyde 3-phosphate: step 3/5. Catalyzes the interconversion of 2-phosphoglycerate and 3-phosphoglycerate. The chain is 2,3-bisphosphoglycerate-independent phosphoglycerate mutase from Wolinella succinogenes (strain ATCC 29543 / DSM 1740 / CCUG 13145 / JCM 31913 / LMG 7466 / NCTC 11488 / FDC 602W) (Vibrio succinogenes).